Reading from the N-terminus, the 78-residue chain is Large ribosomal subunit protein uL29 (78 aa).

The tract at residues 59–78 is disordered; it reads VESERKRGKSLSSTQTQKEE. The span at 68-78 shows a compositional bias: polar residues; it reads SLSSTQTQKEE.

The protein belongs to the universal ribosomal protein uL29 family.

The chain is Large ribosomal subunit protein uL29 from Synechococcus sp. (strain JA-3-3Ab) (Cyanobacteria bacterium Yellowstone A-Prime).